We begin with the raw amino-acid sequence, 351 residues long: Dysbindin (351 aa).

S11 carries the post-translational modification Phosphoserine. Residues 88 to 181 adopt a coiled-coil conformation; sequence EKKKTSLVEL…ELDAEHAQKV (94 aa). Positions 173 to 331 are dysbindin; that stretch reads LDAEHAQKVL…DEEEVQVDTA (159 aa). The Nuclear export signal motif lies at 243 to 256; sequence LMDISDQEALDVFL. The tract at residues 286-351 is disordered; the sequence is PNPSELRAKP…TPDGGEDSDS (66 aa). Positions 296 to 305 are enriched in polar residues; the sequence is PSSSSTCTDS. 3 positions are modified to phosphoserine: S316, S321, and S349.

It belongs to the dysbindin family. Interacts (via its coiled coil domain) with KXD1. Interacts with CMYA5, PI4K2 and RNF151. Component of the biogenesis of lysosome-related organelles complex 1 (BLOC-1) composed of at least BLOC1S1, BLOC1S2, BLOC1S3, BLOC1S4, BLOC1S5, BLOC1S6, DTNBP1/BLOC1S7 and SNAPIN/BLOC1S8. Interacts directly in the complex with BLOC1S5, BLOC1S6 and SNAPIN/BLOC1S8. The BLOC-1 complex associates with the AP-3 protein complex and membrane protein cargos. This BLOC-1 complex also associates with the BLOC-2 complex in endosomes. Binds to DTNA and DTNB but may not be a physiological binding partner. Interacts (isoform 1 and isoform 2 only) with the DNA-dependent protein kinase complex DNA-PK; the interaction phosphorylates DTNBP1 in vitro. Interacts directly in this complex with XRCC5 and XRCC6. Interacts with AP3M1, AP3B2 and TRIM32. Interacts with XPO1; the interaction exports DTNBP1 out of the nucleus. Ubiquitinated by TRIM32. Ubiquitination leads to DTNBP1 degradation. In terms of processing, isoforms 1 and 2 highly phosphorylated by PRKDC in vitro. Isoform 3 only weakly phosphorylated by PRKDC in vitro. As to expression, detected in brain, in neurons and in neuropil. Isoform 1 is expressed in the cerebral cortex, and hippocampal frontal (HF). Specific expression in the posterior half of the superior temporal gyrus (pSTG). Higher expression of isoform 2 and 3 in the HF than in the pSTG while isoform 1 shows no difference in expression in these areas. In the HF, detected in dentate gyrus (DG) and in pyramidal cells of hippocampus CA2 and CA3 (at protein level). Expressed in all principal neuronal populations of the HF, namely pyramidal neurons in the subiculum and CA1-3, granule cells in the dense cell layer of the DG (DGg), and polymorph cells in the hilus of the DG (DGh). Maximal levels in CA2, CA3, and DGh. Isoform 2 not expressed in the cerebral cortex.

The protein resides in the cytoplasm. It localises to the cytoplasmic vesicle membrane. Its subcellular location is the endosome membrane. The protein localises to the melanosome membrane. It is found in the postsynaptic density. The protein resides in the endoplasmic reticulum. It localises to the nucleus. Its subcellular location is the cytoplasmic vesicle. The protein localises to the secretory vesicle. It is found in the synaptic vesicle membrane. The protein resides in the postsynaptic cell membrane. In terms of biological role, component of the BLOC-1 complex, a complex that is required for normal biogenesis of lysosome-related organelles (LRO), such as platelet dense granules and melanosomes. In concert with the AP-3 complex, the BLOC-1 complex is required to target membrane protein cargos into vesicles assembled at cell bodies for delivery into neurites and nerve terminals. The BLOC-1 complex, in association with SNARE proteins, is also proposed to be involved in neurite extension. Associates with the BLOC-2 complex to facilitate the transport of TYRP1 independent of AP-3 function. Plays a role in synaptic vesicle trafficking and in neurotransmitter release. Plays a role in the regulation of cell surface exposure of DRD2. May play a role in actin cytoskeleton reorganization and neurite outgrowth. May modulate MAPK8 phosphorylation. Appears to promote neuronal transmission and viability through regulating the expression of SNAP25 and SYN1, modulating PI3-kinase-Akt signaling and influencing glutamatergic release. Regulates the expression of SYN1 through binding to its promoter. Modulates prefrontal cortical activity via the dopamine/D2 pathway. In Homo sapiens (Human), this protein is Dysbindin (DTNBP1).